We begin with the raw amino-acid sequence, 611 residues long: tRNA uridine 5-carboxymethylaminomethyl modification enzyme MnmG (611 aa).

Position 14 to 19 (14 to 19 (GAGHAG)) interacts with FAD. Position 274-288 (274-288 (GPRYCPSIEDKIVKF)) interacts with NAD(+).

The protein belongs to the MnmG family. As to quaternary structure, homodimer. Heterotetramer of two MnmE and two MnmG subunits. It depends on FAD as a cofactor.

It is found in the cytoplasm. Functionally, NAD-binding protein involved in the addition of a carboxymethylaminomethyl (cmnm) group at the wobble position (U34) of certain tRNAs, forming tRNA-cmnm(5)s(2)U34. The sequence is that of tRNA uridine 5-carboxymethylaminomethyl modification enzyme MnmG from Chlamydia caviae (strain ATCC VR-813 / DSM 19441 / 03DC25 / GPIC) (Chlamydophila caviae).